Here is a 377-residue protein sequence, read N- to C-terminus: MMSKLFTPLQVGFCQLKHRVIMAPLTRFRADDNNVPLPIAKEYYSQRASVPGTLIIAEATYISLAAGGYPNVPGIWSPEQIARWKEITDAVHAQGSYIFLQLWALGRVGDADTLKQDGFDLISSSAVPVDAGEPVPRAMTEEEIKQYIALYAQAARNAVMAGFDGVELHGGNGYLVDQFTQDTCNRRTDSWGGSIPNRSRFAVEVTRAMVQAIGSERVAVKLTPWNDQQGMKMKDMEQQFLHLITSLKELKLAYLHLTNPRVSVDEDVPLQGPPDGHPLEDNAGFVKAWGETSPVFLGGGYTPQSAKHTLDVDYPLNEIGAVFGRLFISNPDLPLRLRDGLPFTPYDRDSFYTPLSPIGYSDYPFSDQAVDLIPVRV.

NADP(+) is bound by residues 170–173 (GGNG), 257–263 (LTNPRVS), and 293–295 (SPV).

It belongs to the NADP-dependent oxidoreductase L4BD family.

It participates in secondary metabolite biosynthesis. Its function is as follows. NADP-dependent oxidoreductase; part of the lnb gene cluster that mediates the biosynthesis of diastereomeric piperazines. Lna and lnb clusters encode sets of enzymes that produce overlapping sets of previously undescribed metabolites such as piperazinomycin-like metabolites or morpholine. The lna and lnb biosynthetic pathways appear to be part of a signaling network that controls the formation of sclerotia, a resilient overwintering structure. One primary function of the non-canonical nonribosomal peptide synthetases lnaA and lnbA consists in the reduction of L-tyrosine. The presence in the clusters of tailoring enzymes such as the oxidoreductases lnaB, lnbB, lnaE or lnbE, as well as of the cytochrome P450 monooxygenases lnaC, lnaD, or lnbC, might explain formation of various diastereomeric piperazines. The chain is NADP-dependent oxidoreductase lnbE from Aspergillus flavus (strain ATCC 200026 / FGSC A1120 / IAM 13836 / NRRL 3357 / JCM 12722 / SRRC 167).